The chain runs to 345 residues: Microtubule-associated protein Jupiter (345 aa).

The segment covering 1-14 (MISNFDCTDNQASS) has biased composition (polar residues). The tract at residues 1–34 (MISNFDCTDNQASSKVLRPPGGGSSDIFGSEMPQ) is disordered. Ser24 bears the Phosphoserine mark. At Thr35 the chain carries Phosphothreonine. Basic and acidic residues predominate over residues 78-87 (QKTVDSHNRL). The segment at 78-100 (QKTVDSHNRLFGEPTRPITPGKN) is disordered. Thr92 and Thr96 each carry phosphothreonine. 3 positions are modified to phosphoserine: Ser105, Ser134, and Ser145. Disordered regions lie at residues 127–241 (HYNG…QPHS) and 300–345 (EGNP…SGLW). A compositionally biased stretch (low complexity) spans 132 to 145 (SGSVSSASSSVSSS). Residues 146 to 164 (TENLKMNSGSRSVFRNMST) show a composition bias toward polar residues. Over residues 177–191 (LCPPSPVRIEPPTPP) the composition is skewed to pro residues. Polar residues-rich tracts occupy residues 212–226 (DNST…NEAC) and 315–326 (DYNQRQESSNAG).

It belongs to the MAP Jupiter family.

The protein localises to the nucleus. It is found in the cytoplasm. It localises to the cytoskeleton. The protein resides in the spindle. Binds to all microtubule populations. This is Microtubule-associated protein Jupiter from Drosophila erecta (Fruit fly).